Reading from the N-terminus, the 79-residue chain is Sulfur carrier protein TusA (79 aa).

The active-site Cysteine persulfide intermediate is Cys-17.

The protein belongs to the sulfur carrier protein TusA family.

The protein resides in the cytoplasm. Functionally, sulfur carrier protein which probably makes part of a sulfur-relay system. The protein is Sulfur carrier protein TusA of Mannheimia succiniciproducens (strain KCTC 0769BP / MBEL55E).